The sequence spans 477 residues: MSVKVDGMINKKSKTHSKKLDARALAEKIKKNALKQQAQEEPAKEENVAENFDTVVDPTAELKFKSFNELKLIPELLEAIQQMKFTKPTPIQSEAIPHALEGKDIIGLAQTGSGKTAAFAIPILQALWEAQAAYYGLVLAPTRELAYQIKETFDALGSSMGLRSVCIVGGMDMMDQARDLMRKPHILVATPGRIMDHLEHTKGFSLKNLKYLVMDEADRLLDMDFGPALDKILKIIPTQRTTYLFSATMTNKIAKLQRASLHNPVRVAVSNKYQTADNLVQSMMLVSDGYKNTYLIHLLNEFLGKSIIIFTRTCAHSQRTALLARILGFSAVPLHGQLTQAQRLGSLNKFKAGKANILIATDVAARGLDIPSVDIVINYDIPTDSKAYIHRVGRTARAGKSGKSISLITQYDLEMYLRIESVLGKKLPKDPSPSKAVLDTLHVHVDRASAEAIRQTKDFHEKRNPKKNRDDRDREER.

Positions 1–22 (MSVKVDGMINKKSKTHSKKLDA) are disordered. The Q motif signature appears at 65–93 (KSFNELKLIPELLEAIQQMKFTKPTPIQS). The Helicase ATP-binding domain maps to 96–267 (IPHALEGKDI…RASLHNPVRV (172 aa)). 109–116 (AQTGSGKT) serves as a coordination point for ATP. The DEAD box signature appears at 215 to 218 (DEAD). Residues 294–438 (YLIHLLNEFL…KDPSPSKAVL (145 aa)) enclose the Helicase C-terminal domain. A disordered region spans residues 452–477 (AIRQTKDFHEKRNPKKNRDDRDREER).

This sequence belongs to the DEAD box helicase family. DDX47/RRP3 subfamily. Interacts with the SSU processome.

The protein resides in the nucleus. It carries out the reaction ATP + H2O = ADP + phosphate + H(+). In terms of biological role, ATP-dependent rRNA helicase required for pre-ribosomal RNA processing. Involved in the maturation of the 35S-pre-rRNA and to its cleavage to mature 18S rRNA. The protein is ATP-dependent rRNA helicase RRP3 of Debaryomyces hansenii (strain ATCC 36239 / CBS 767 / BCRC 21394 / JCM 1990 / NBRC 0083 / IGC 2968) (Yeast).